Reading from the N-terminus, the 165-residue chain is V-type proton ATPase 16 kDa proteolipid subunit (165 aa).

Residues 1–12 (MSTVFNGDETAP) lie on the Lumenal side of the membrane. The helical transmembrane segment at 13–33 (FFGFLGAAAALVFSCMGAAYG) threads the bilayer. Topologically, residues 34 to 55 (TAKSGVGVASMGVMRPELVMKS) are cytoplasmic. The chain crosses the membrane as a helical span at residues 56-76 (IVPVVMAGVLGIYGLIIAVII). Over 77 to 95 (STGINPKAKSYYLFDGYAH) the chain is Lumenal. Residues 96 to 117 (LSSGLACGLAGLSAGMAIGIVG) traverse the membrane as a helical segment. At 118-129 (DAGVRANAQQPK) the chain is on the cytoplasmic side. A helical transmembrane segment spans residues 130–155 (LFVGMILILIFAEALALYGLIVGIIL). At 156–165 (SSRAGQSRAD) the chain is on the lumenal side.

It belongs to the V-ATPase proteolipid subunit family. In terms of assembly, V-ATPase is a heteromultimeric enzyme composed of a peripheral catalytic V1 complex (main components: subunits A, B, C, D, E, and F) attached to an integral membrane V0 proton pore complex (main component: the proteolipid protein; which is present as a hexamer that forms the proton-conducting pore).

Its subcellular location is the vacuole membrane. Proton-conducting pore forming subunit of the membrane integral V0 complex of vacuolar ATPase. V-ATPase is responsible for acidifying a variety of intracellular compartments in eukaryotic cells. This is V-type proton ATPase 16 kDa proteolipid subunit (VMAC1) from Mesembryanthemum crystallinum (Common ice plant).